A 570-amino-acid polypeptide reads, in one-letter code: Proline--tRNA ligase (570 aa).

The protein belongs to the class-II aminoacyl-tRNA synthetase family. ProS type 1 subfamily. In terms of assembly, homodimer.

The protein resides in the cytoplasm. The enzyme catalyses tRNA(Pro) + L-proline + ATP = L-prolyl-tRNA(Pro) + AMP + diphosphate. Its function is as follows. Catalyzes the attachment of proline to tRNA(Pro) in a two-step reaction: proline is first activated by ATP to form Pro-AMP and then transferred to the acceptor end of tRNA(Pro). As ProRS can inadvertently accommodate and process non-cognate amino acids such as alanine and cysteine, to avoid such errors it has two additional distinct editing activities against alanine. One activity is designated as 'pretransfer' editing and involves the tRNA(Pro)-independent hydrolysis of activated Ala-AMP. The other activity is designated 'posttransfer' editing and involves deacylation of mischarged Ala-tRNA(Pro). The misacylated Cys-tRNA(Pro) is not edited by ProRS. The polypeptide is Proline--tRNA ligase (Neisseria meningitidis serogroup C / serotype 2a (strain ATCC 700532 / DSM 15464 / FAM18)).